A 600-amino-acid chain; its full sequence is Malto-oligosyltrehalose trehalohydrolase (600 aa).

The disordered stretch occupies residues methionine 1–alanine 34. Residue arginine 273 to proline 278 participates in substrate binding. The active-site Nucleophile is aspartate 275. Residue glutamate 308 is the Proton donor of the active site. Residues aspartate 328–histidine 332, glutamate 376, and histidine 399–asparagine 404 each bind substrate.

The protein belongs to the glycosyl hydrolase 13 family. Monomer.

It localises to the cytoplasm. The catalysed reaction is hydrolysis of (1-&gt;4)-alpha-D-glucosidic linkage in 4-alpha-D-[(1-&gt;4)-alpha-D-glucanosyl]n trehalose to yield trehalose and (1-&gt;4)-alpha-D-glucan.. It participates in glycan biosynthesis; trehalose biosynthesis. In Deinococcus radiodurans (strain ATCC 13939 / DSM 20539 / JCM 16871 / CCUG 27074 / LMG 4051 / NBRC 15346 / NCIMB 9279 / VKM B-1422 / R1), this protein is Malto-oligosyltrehalose trehalohydrolase (treZ).